The sequence spans 333 residues: Glyceraldehyde-3-phosphate dehydrogenase (333 aa).

NAD(+) contacts are provided by residues 11–12 (RI), Asp-33, Arg-78, and Ser-120. D-glyceraldehyde 3-phosphate is bound by residues 149–151 (SCT), Thr-180, 209–210 (TG), and Arg-232. Cys-150 acts as the Nucleophile in catalysis. An S-nitrosocysteine modification is found at Cys-150. Residue Asn-314 coordinates NAD(+).

This sequence belongs to the glyceraldehyde-3-phosphate dehydrogenase family. Homotetramer. S-nitrosylation of Cys-150 leads to translocation to the nucleus.

Its subcellular location is the cytoplasm. It is found in the cytosol. It localises to the cytoskeleton. The protein localises to the nucleus. It carries out the reaction D-glyceraldehyde 3-phosphate + phosphate + NAD(+) = (2R)-3-phospho-glyceroyl phosphate + NADH + H(+). The enzyme catalyses S-nitroso-L-cysteinyl-[GAPDH] + L-cysteinyl-[protein] = L-cysteinyl-[GAPDH] + S-nitroso-L-cysteinyl-[protein]. It functions in the pathway carbohydrate degradation; glycolysis; pyruvate from D-glyceraldehyde 3-phosphate: step 1/5. Has both glyceraldehyde-3-phosphate dehydrogenase and nitrosylase activities, thereby playing a role in glycolysis and nuclear functions, respectively. Glyceraldehyde-3-phosphate dehydrogenase is a key enzyme in glycolysis that catalyzes the first step of the pathway by converting D-glyceraldehyde 3-phosphate (G3P) into 3-phospho-D-glyceroyl phosphate. Participates in nuclear events including transcription, RNA transport, DNA replication and apoptosis. Nuclear functions are probably due to the nitrosylase activity that mediates cysteine S-nitrosylation of nuclear target proteins such as SIRT1, HDAC2 and PRKDC. The chain is Glyceraldehyde-3-phosphate dehydrogenase from Danio rerio (Zebrafish).